We begin with the raw amino-acid sequence, 130 residues long: Large ribosomal subunit protein bL12 (130 aa).

Belongs to the bacterial ribosomal protein bL12 family. In terms of assembly, homodimer. Part of the ribosomal stalk of the 50S ribosomal subunit. Forms a multimeric L10(L12)X complex, where L10 forms an elongated spine to which 2 to 4 L12 dimers bind in a sequential fashion. Binds GTP-bound translation factors.

In terms of biological role, forms part of the ribosomal stalk which helps the ribosome interact with GTP-bound translation factors. Is thus essential for accurate translation. This is Large ribosomal subunit protein bL12 from Mycobacterium leprae (strain TN).